A 227-amino-acid polypeptide reads, in one-letter code: MAYPFELGFQDATSPIMEELLHFHDHTLMIVFLISSLVLYIISLMLTTKLTHTSTMDAQEVETIWTILPAIILILIALPSLRILYMMDEINDPSLTVKTMGHQWYWSYEYTDYEDLNFDSYMIPTSDLSPGELRLLEVDNRVVLPMELPIRMLISSEDVLHSWAIPSLGLKTDAIPGRLNQATLTSTRPGLYYGQCSEICGSNHSFMPIVLELVPLKHFENWSSSML.

Residues 1 to 14 (MAYPFELGFQDATS) are Mitochondrial intermembrane-facing. A helical membrane pass occupies residues 15–45 (PIMEELLHFHDHTLMIVFLISSLVLYIISLM). Over 46-59 (LTTKLTHTSTMDAQ) the chain is Mitochondrial matrix. Residues 60–87 (EVETIWTILPAIILILIALPSLRILYMM) form a helical membrane-spanning segment. The Mitochondrial intermembrane portion of the chain corresponds to 88–227 (DEINDPSLTV…HFENWSSSML (140 aa)). 6 residues coordinate Cu cation: H161, C196, E198, C200, H204, and M207. Mg(2+) is bound at residue E198.

This sequence belongs to the cytochrome c oxidase subunit 2 family. As to quaternary structure, component of the cytochrome c oxidase (complex IV, CIV), a multisubunit enzyme composed of 14 subunits. The complex is composed of a catalytic core of 3 subunits MT-CO1, MT-CO2 and MT-CO3, encoded in the mitochondrial DNA, and 11 supernumerary subunits COX4I, COX5A, COX5B, COX6A, COX6B, COX6C, COX7A, COX7B, COX7C, COX8 and NDUFA4, which are encoded in the nuclear genome. The complex exists as a monomer or a dimer and forms supercomplexes (SCs) in the inner mitochondrial membrane with NADH-ubiquinone oxidoreductase (complex I, CI) and ubiquinol-cytochrome c oxidoreductase (cytochrome b-c1 complex, complex III, CIII), resulting in different assemblies (supercomplex SCI(1)III(2)IV(1) and megacomplex MCI(2)III(2)IV(2)). Found in a complex with TMEM177, COA6, COX18, COX20, SCO1 and SCO2. Interacts with TMEM177 in a COX20-dependent manner. Interacts with COX20. Interacts with COX16. Requires Cu cation as cofactor.

It is found in the mitochondrion inner membrane. The catalysed reaction is 4 Fe(II)-[cytochrome c] + O2 + 8 H(+)(in) = 4 Fe(III)-[cytochrome c] + 2 H2O + 4 H(+)(out). Functionally, component of the cytochrome c oxidase, the last enzyme in the mitochondrial electron transport chain which drives oxidative phosphorylation. The respiratory chain contains 3 multisubunit complexes succinate dehydrogenase (complex II, CII), ubiquinol-cytochrome c oxidoreductase (cytochrome b-c1 complex, complex III, CIII) and cytochrome c oxidase (complex IV, CIV), that cooperate to transfer electrons derived from NADH and succinate to molecular oxygen, creating an electrochemical gradient over the inner membrane that drives transmembrane transport and the ATP synthase. Cytochrome c oxidase is the component of the respiratory chain that catalyzes the reduction of oxygen to water. Electrons originating from reduced cytochrome c in the intermembrane space (IMS) are transferred via the dinuclear copper A center (CU(A)) of subunit 2 and heme A of subunit 1 to the active site in subunit 1, a binuclear center (BNC) formed by heme A3 and copper B (CU(B)). The BNC reduces molecular oxygen to 2 water molecules using 4 electrons from cytochrome c in the IMS and 4 protons from the mitochondrial matrix. This Neotamias bulleri (Buller's chipmunk) protein is Cytochrome c oxidase subunit 2 (MT-CO2).